A 199-amino-acid chain; its full sequence is MEISMDLIKKLREMTGAGILDCKKALEEAGGDMEKAVEILRKKGAATAEKKAGRTTKEGIIVAYVHFNGRIGVLLEMNCETDFVARTDEFKELAYNLAKQVAAMKPLYVRREDVPAEVIEKEKEIYRAQIKDKPENIVEKIVEGKLEKYFEQVCLYEQTYIFDDTKKVKDLINELIAKTGENIRVSRFTRYEIGEGYED.

Residues Thr-81–Val-84 form an involved in Mg(2+) ion dislocation from EF-Tu region.

The protein belongs to the EF-Ts family.

It is found in the cytoplasm. Associates with the EF-Tu.GDP complex and induces the exchange of GDP to GTP. It remains bound to the aminoacyl-tRNA.EF-Tu.GTP complex up to the GTP hydrolysis stage on the ribosome. This Thermotoga petrophila (strain ATCC BAA-488 / DSM 13995 / JCM 10881 / RKU-1) protein is Elongation factor Ts.